A 308-amino-acid polypeptide reads, in one-letter code: Ribosomal RNA large subunit methyltransferase F (308 aa).

The protein belongs to the methyltransferase superfamily. METTL16/RlmF family.

Its subcellular location is the cytoplasm. The catalysed reaction is adenosine(1618) in 23S rRNA + S-adenosyl-L-methionine = N(6)-methyladenosine(1618) in 23S rRNA + S-adenosyl-L-homocysteine + H(+). In terms of biological role, specifically methylates the adenine in position 1618 of 23S rRNA. The protein is Ribosomal RNA large subunit methyltransferase F of Shigella dysenteriae serotype 1 (strain Sd197).